Here is a 391-residue protein sequence, read N- to C-terminus: Probable protein phosphatase 2C 32 (391 aa).

The interval M1 to R53 is disordered. Low complexity predominate over residues P8–P51. Residues L95–V115 form a helical membrane-spanning segment. The region spanning E129–L386 is the PPM-type phosphatase domain. Mn(2+) is bound by residues D168, G169, D332, and D377.

Belongs to the PP2C family. Mg(2+) is required as a cofactor. It depends on Mn(2+) as a cofactor.

Its subcellular location is the membrane. It carries out the reaction O-phospho-L-seryl-[protein] + H2O = L-seryl-[protein] + phosphate. The enzyme catalyses O-phospho-L-threonyl-[protein] + H2O = L-threonyl-[protein] + phosphate. The protein is Probable protein phosphatase 2C 32 of Oryza sativa subsp. japonica (Rice).